Here is a 70-residue protein sequence, read N- to C-terminus: UPF0270 protein VP2791 (70 aa).

The protein belongs to the UPF0270 family.

In Vibrio parahaemolyticus serotype O3:K6 (strain RIMD 2210633), this protein is UPF0270 protein VP2791.